The sequence spans 647 residues: Threonine--tRNA ligase (647 aa).

Residues 1 to 61 (MINITFPDGA…TEDGSIEIVT (61 aa)) enclose the TGS domain. Positions 242–540 (DHRKLGKELD…LIENYKGAFP (299 aa)) are catalytic. Positions 336, 387, and 517 each coordinate Zn(2+).

It belongs to the class-II aminoacyl-tRNA synthetase family. In terms of assembly, homodimer. Requires Zn(2+) as cofactor.

Its subcellular location is the cytoplasm. It catalyses the reaction tRNA(Thr) + L-threonine + ATP = L-threonyl-tRNA(Thr) + AMP + diphosphate + H(+). Its function is as follows. Catalyzes the attachment of threonine to tRNA(Thr) in a two-step reaction: L-threonine is first activated by ATP to form Thr-AMP and then transferred to the acceptor end of tRNA(Thr). Also edits incorrectly charged L-seryl-tRNA(Thr). This Streptococcus pneumoniae (strain P1031) protein is Threonine--tRNA ligase.